An 82-amino-acid polypeptide reads, in one-letter code: MALFNSISKIGSINSKSNTLINSTMNGNAFGSNEISVLANTNVNAATNTNLSVAGITLVNAKTNTNALKFKSITKCNSCCNY.

This is an uncharacterized protein from Dictyostelium discoideum (Social amoeba).